We begin with the raw amino-acid sequence, 815 residues long: Phenylalanine--tRNA ligase beta subunit (815 aa).

The tRNA-binding domain occupies alanine 40–arginine 155. A B5 domain is found at proline 406 to alanine 485. 4 residues coordinate Mg(2+): aspartate 463, aspartate 469, glutamate 472, and glutamate 473. The FDX-ACB domain maps to serine 712–arginine 814.

Belongs to the phenylalanyl-tRNA synthetase beta subunit family. Type 1 subfamily. As to quaternary structure, tetramer of two alpha and two beta subunits. Requires Mg(2+) as cofactor.

It localises to the cytoplasm. The enzyme catalyses tRNA(Phe) + L-phenylalanine + ATP = L-phenylalanyl-tRNA(Phe) + AMP + diphosphate + H(+). This is Phenylalanine--tRNA ligase beta subunit from Cupriavidus pinatubonensis (strain JMP 134 / LMG 1197) (Cupriavidus necator (strain JMP 134)).